We begin with the raw amino-acid sequence, 664 residues long: UV-stimulated scaffold protein A homolog (664 aa).

The interval 10–153 (KVIGLIEKAT…LKNTLKLKFP (144 aa)) is VHS-like. Residues 148–180 (LKLKFPDLQANAARIQRERQEREMKTKEILRNK) adopt a coiled-coil conformation. Disordered regions lie at residues 330–350 (HGNE…DGKV) and 362–403 (MRTQ…GNSL). Positions 334–347 (ETNEEEEDIWEEDD) are enriched in acidic residues. A compositionally biased stretch (polar residues) spans 363-374 (RTQQSENSSLPS). A compositionally biased stretch (basic and acidic residues) spans 377 to 387 (EAKKSTSEARS). A compositionally biased stretch (polar residues) spans 388-402 (NKVSNTKKVGSSGNS). The segment at 473–500 (TPPCRASLKKGGLCQRRDLRVCPFHGPI) adopts a UVSSA-type zinc-finger fold. Zn(2+) is bound by residues Cys-476, Cys-486, Cys-494, and His-497. 2 disordered regions span residues 514–546 (SPLD…DPNQ) and 640–664 (VKGT…ANQW). Polar residues-rich tracts occupy residues 521–533 (NQTS…NQDV) and 640–650 (VKGTNPQQLAQ).

The protein belongs to the UVSSA family.

It localises to the chromosome. The sequence is that of UV-stimulated scaffold protein A homolog from Arabidopsis thaliana (Mouse-ear cress).